The sequence spans 103 residues: uncharacterized protein (103 aa).

An N-terminal signal peptide occupies residues 1 to 21; that stretch reads MTGFKVSSFFYILALSRFFNA.

This is an uncharacterized protein from Saccharomyces cerevisiae (strain ATCC 204508 / S288c) (Baker's yeast).